Consider the following 521-residue polypeptide: MSIQLHDKVSLLILDFGSQYTQLIARRLREYGIYCEIVPYHEKLEAIKAREPKGIILSGGPASVYEEDAFLIDKAVFELGIPVLGICYGMQLMTHYFGGVVAKAEHHEYGKAEVIFDALEGSESKLFEGCHSGKVVWMSHGDKVEKLPEGFTRIAHSTNSPFAAIAHQEKPFYAVQFHPEVVHSEEGALYLKNFALGICGCENDWNMHNFAEEQIKKIQERVKSGKVLCAVSGGVDSSVVAALLYRAIGEKLIPVFVDHGLLRAGEREAVEKMFKENLHVPLITVDASEIFLGKLKGVSDPETKRKIIGETFIEVFDVEAKKHDGIQYLAQGTLYPDVIESVSVKGPSKTIKSHHNVGGLPDWMTFELIEPLRELFKDEVRALGAELGMPREMLMRHPFPGPGLAIRIMGEVNFEDLELLRKADVIMLDELKKSGFYDKTWQAFTVLLNVRSVGVMGDNRTYDNTVCVRVVEAIDGMTATFAHLPHELLERMSTRIINEVDGINRVVYDISSKPPATIEWE.

In terms of domain architecture, Glutamine amidotransferase type-1 spans serine 10–aspartate 204. Residue cysteine 87 is the Nucleophile of the active site. Catalysis depends on residues histidine 178 and glutamate 180. The region spanning tryptophan 205–arginine 396 is the GMPS ATP-PPase domain. Residue serine 232–serine 238 coordinates ATP.

In terms of assembly, homodimer.

It carries out the reaction XMP + L-glutamine + ATP + H2O = GMP + L-glutamate + AMP + diphosphate + 2 H(+). Its pathway is purine metabolism; GMP biosynthesis; GMP from XMP (L-Gln route): step 1/1. Its function is as follows. Catalyzes the synthesis of GMP from XMP. This is GMP synthase [glutamine-hydrolyzing] from Wolinella succinogenes (strain ATCC 29543 / DSM 1740 / CCUG 13145 / JCM 31913 / LMG 7466 / NCTC 11488 / FDC 602W) (Vibrio succinogenes).